Reading from the N-terminus, the 254-residue chain is 5-oxoprolinase subunit A (254 aa).

It belongs to the LamB/PxpA family. Forms a complex composed of PxpA, PxpB and PxpC.

It carries out the reaction 5-oxo-L-proline + ATP + 2 H2O = L-glutamate + ADP + phosphate + H(+). Functionally, catalyzes the cleavage of 5-oxoproline to form L-glutamate coupled to the hydrolysis of ATP to ADP and inorganic phosphate. The polypeptide is 5-oxoprolinase subunit A (Burkholderia thailandensis (strain ATCC 700388 / DSM 13276 / CCUG 48851 / CIP 106301 / E264)).